The following is a 282-amino-acid chain: 5'-adenylylsulfate reductase-like 2 (282 aa).

Residues 1–19 form the signal peptide; that stretch reads MRWWPALPLLLLAVAVAGA. One can recognise a Thioredoxin domain in the interval 20 to 159; that stretch reads GDAAPVCTRP…LAAFYNDVSG (140 aa). Residue asparagine 134 is glycosylated (N-linked (GlcNAc...) asparagine). The helical transmembrane segment at 205-225 threads the bilayer; it reads AASFVILRLLYLFYPKITAFV.

It localises to the membrane. The polypeptide is 5'-adenylylsulfate reductase-like 2 (APRL2) (Oryza sativa subsp. japonica (Rice)).